The sequence spans 223 residues: MEDKEKLIVYSNTSSVFTYSAEIRPNFKISVSQSQGFAWNQDLFATQYQQSYKVVYDAHEDNFDELILKIKGKLKTKSNKRAKMKSKTKLTRTAKQRRESPVCERDESDEDNDSDHYQRIQVLDGHEFPRANRYKSVWAHDVHSNEDSTSDGESNHDIDMIGGTGTSYAGAAIMDRPRRKSERSISFVEDSKTGDYRYQTGQVDVVEVDSDTPENNHLKWLIK.

Residues 78–95 (SNKRAKMKSKTKLTRTAK) show a composition bias toward basic residues. The disordered stretch occupies residues 78–117 (SNKRAKMKSKTKLTRTAKQRRESPVCERDESDEDNDSDHY). Residues 96 to 105 (QRRESPVCER) are compositionally biased toward basic and acidic residues.

The chain is Protein UGX2 (UGX2) from Saccharomyces cerevisiae (strain ATCC 204508 / S288c) (Baker's yeast).